Here is a 1371-residue protein sequence, read N- to C-terminus: Perilipin-4 (1371 aa).

The span at 1-13 (MSAPDEGRRDPPK) shows a compositional bias: basic and acidic residues. Residues 1–22 (MSAPDEGRRDPPKPKGKTLGSF) form a disordered region. A phosphoserine mark is found at Ser25 and Ser31. Residues 37–86 (ANAHSSARARPAADPTGAPAAEAAQPQAQVAAHPEQTAPWTEKELQPSEK) are disordered. Residues 44–72 (RARPAADPTGAPAAEAAQPQAQVAAHPEQ) are compositionally biased toward low complexity. A run of 27 repeats spans residues 109–141 (GVAS…VVSS), 142–174 (GVTG…TVST), 175–207 (GLTG…TVTT), 208–240 (GVMG…AVST), 241–273 (GLTG…TVCS), 274–306 (GVTG…TVCS), 307–339 (GVTG…TVCS), 340–372 (GVTG…TVCS), 373–405 (GVTG…TMST), 406–438 (GLTG…TVCS), 439–471 (GVTG…TVCS), 472–504 (GVTG…AVST), 505–537 (GLTG…TVCS), 538–570 (GVTS…TMST), 571–603 (GLTG…TVTT), 604–636 (GLVG…TIYS), 637–669 (GVTS…TFGS), 670–702 (GVTS…TVTT), 703–735 (GLMG…TVCS), 736–768 (GVTG…AVST), 769–801 (GLTG…AVCS), 802–834 (GVTG…TVCS), 835–867 (GVTG…TLGS), 868–900 (GVTG…AVST), 901–933 (GLTG…TVCS), 934–966 (GVTG…AVTT), and 967–999 (GVTG…TVFS). Positions 109–999 (GVASVVDVAK…LMGTKDTVFS (891 aa)) are 27 X 33 AA approximate tandem repeat. Over residues 1060–1083 (PATSWGGLTSSRTTDNGGEQTALS) the composition is skewed to polar residues. 2 disordered regions span residues 1060 to 1093 (PATS…SGIS) and 1240 to 1260 (QAPE…EDAA).

It belongs to the perilipin family.

The protein resides in the cell membrane. It is found in the cytoplasm. It localises to the lipid droplet. May play a role in triacylglycerol packaging into adipocytes. May function as a coat protein involved in the biogenesis of lipid droplets. The chain is Perilipin-4 from Homo sapiens (Human).